The sequence spans 81 residues: Saposin-C (81 aa).

The Saposin B-type domain maps to 1 to 81 (ESVTCKACEY…CSELGLCMSG (81 aa)). Intrachain disulfides connect Cys-5/Cys-78, Cys-8/Cys-72, and Cys-36/Cys-47. N-linked (GlcNAc...) asparagine glycosylation is present at Asn-22.

Saposin-A and saposin-C stimulate the hydrolysis of glucosylceramide by beta-glucosylceramidase (EC 3.2.1.45) and galactosylceramide by beta-galactosylceramidase (EC 3.2.1.46). Saposin-C apparently acts by combining with the enzyme and acidic lipid to form an activated complex, rather than by solubilizing the substrate. This Cavia porcellus (Guinea pig) protein is Saposin-C (PSAP).